The primary structure comprises 617 residues: Dihydroxy-acid dehydratase (617 aa).

A Mg(2+)-binding site is contributed by Asp81. Residue Cys122 participates in [2Fe-2S] cluster binding. Asp123 and Lys124 together coordinate Mg(2+). Lys124 is modified (N6-carboxylysine). Residue Cys195 coordinates [2Fe-2S] cluster. A Mg(2+)-binding site is contributed by Glu491. Ser517 (proton acceptor) is an active-site residue.

The protein belongs to the IlvD/Edd family. As to quaternary structure, homodimer. [2Fe-2S] cluster is required as a cofactor. Mg(2+) serves as cofactor.

The enzyme catalyses (2R)-2,3-dihydroxy-3-methylbutanoate = 3-methyl-2-oxobutanoate + H2O. It carries out the reaction (2R,3R)-2,3-dihydroxy-3-methylpentanoate = (S)-3-methyl-2-oxopentanoate + H2O. Its pathway is amino-acid biosynthesis; L-isoleucine biosynthesis; L-isoleucine from 2-oxobutanoate: step 3/4. It functions in the pathway amino-acid biosynthesis; L-valine biosynthesis; L-valine from pyruvate: step 3/4. Functionally, functions in the biosynthesis of branched-chain amino acids. Catalyzes the dehydration of (2R,3R)-2,3-dihydroxy-3-methylpentanoate (2,3-dihydroxy-3-methylvalerate) into 2-oxo-3-methylpentanoate (2-oxo-3-methylvalerate) and of (2R)-2,3-dihydroxy-3-methylbutanoate (2,3-dihydroxyisovalerate) into 2-oxo-3-methylbutanoate (2-oxoisovalerate), the penultimate precursor to L-isoleucine and L-valine, respectively. The polypeptide is Dihydroxy-acid dehydratase (Rhodospirillum rubrum (strain ATCC 11170 / ATH 1.1.1 / DSM 467 / LMG 4362 / NCIMB 8255 / S1)).